Reading from the N-terminus, the 280-residue chain is Release factor glutamine methyltransferase (280 aa).

Residues 120–124, Asp143, and Asn186 contribute to the S-adenosyl-L-methionine site; that span reads GTGSG. Position 186–189 (186–189) interacts with substrate; that stretch reads NPPY.

This sequence belongs to the protein N5-glutamine methyltransferase family. PrmC subfamily.

The enzyme catalyses L-glutaminyl-[peptide chain release factor] + S-adenosyl-L-methionine = N(5)-methyl-L-glutaminyl-[peptide chain release factor] + S-adenosyl-L-homocysteine + H(+). Functionally, methylates the class 1 translation termination release factors RF1/PrfA and RF2/PrfB on the glutamine residue of the universally conserved GGQ motif. The polypeptide is Release factor glutamine methyltransferase (Koribacter versatilis (strain Ellin345)).